A 468-amino-acid polypeptide reads, in one-letter code: Lipase 1 (468 aa).

Positions 1–16 are cleaved as a signal peptide; that stretch reads MRGIAVFLAFISLIFA. An N-linked (GlcNAc...) asparagine glycan is attached at N79. C112 and C285 form a disulfide bridge. S196 (charge relay system) is an active-site residue. N-linked (GlcNAc...) asparagine glycans are attached at residues N231 and N319. Active-site charge relay system residues include D348 and H381. C364 and C409 are oxidised to a cystine. N417, N422, and N451 each carry an N-linked (GlcNAc...) asparagine glycan.

It belongs to the AB hydrolase superfamily. Lipase family. Class Lip subfamily.

It is found in the secreted. It carries out the reaction a triacylglycerol + H2O = a diacylglycerol + a fatty acid + H(+). In terms of biological role, secreted lipase that is able to hydrolyze both the neutral triacylglycerols and the monopalmitate ester Tween 40, allowing the use of hydrolyzed products as carbon sources. Has broad lipolytic activity, which may be important for colonization and subsequent infection, therefore contributing to the persistence and virulence in human tissue. In Candida albicans (strain SC5314 / ATCC MYA-2876) (Yeast), this protein is Lipase 1.